We begin with the raw amino-acid sequence, 329 residues long: Synaptonemal complex central element protein 1 (329 aa).

A disordered region spans residues 1-29 (MATRPQPLGMEPEGSADLLHGPEGARGQY). 2 coiled-coil regions span residues 54–167 (RIEV…LETL) and 194–294 (KEQL…ILAH). Residues 291–329 (ILAHSTQNEEDSSWRMASPKPVEVHEETAQDQERPSSRT) form a disordered region. Over residues 312 to 329 (VEVHEETAQDQERPSSRT) the composition is skewed to basic and acidic residues.

This sequence belongs to the SYCE family. Homodimer. Found in a complex with SYCP1 and SYCE2. Interacts with SYCP1, SYCE2 and SYCE3. Interacts with SIX6OS1. Meiotic cells (at protein level). Expressed in the ovary and testis.

Its subcellular location is the nucleus. The protein localises to the chromosome. Major component of the transverse central element of synaptonemal complexes (SCS), formed between homologous chromosomes during meiotic prophase. Requires SYCP1 in order to be incorporated into the central element. May have a role in the synaptonemal complex assembly, stabilization and recombination. This chain is Synaptonemal complex central element protein 1 (Syce1), found in Mus musculus (Mouse).